The sequence spans 151 residues: F-box protein GID2 (151 aa).

Basic and acidic residues predominate over residues 1 to 25; the sequence is MKRSTTDSDLAGDAHNETNKKMKST. Residues 1 to 27 form a disordered region; the sequence is MKRSTTDSDLAGDAHNETNKKMKSTEE. The F-box domain occupies 29–75; that stretch reads EIGFSNLDENLVYEVLKHVDAKTLAMSSCVSKIWHKTAQDERLWELI.

Part of some SCF(GID2) complex, which consist of SKP1B, CUL1 cullin, GID2/SLY1 and some RING box protein. Interacts directly with SKP1A and SKP1B. Interacts directly with DELLA proteins GAI, RGA, RGL1, RGL3 and probably RGL2. May have a higher affinity for phosphorylated DELLA proteins. As to expression, expressed in all tissues tested, including rosette leaves, green siliques, flowers, stems, cauline leaves and seedlings.

Its subcellular location is the nucleus. Its pathway is protein modification; protein ubiquitination. In terms of biological role, essential component of the SCF-type E3 ligase complex, SCF(GID2), a complex that positively regulates the gibberellin signaling pathway. Upon gibberellin treatment, the SCF(GID2) complex mediates the ubiquitination and subsequent degradation of DELLA proteins (GAI, RGA and RGL2), some repressors of the gibberellin pathway, leading to activate the pathway. In Arabidopsis thaliana (Mouse-ear cress), this protein is F-box protein GID2 (GID2).